The following is a 690-amino-acid chain: Glycine--tRNA ligase beta subunit (690 aa).

Belongs to the class-II aminoacyl-tRNA synthetase family. In terms of assembly, tetramer of two alpha and two beta subunits.

It is found in the cytoplasm. The enzyme catalyses tRNA(Gly) + glycine + ATP = glycyl-tRNA(Gly) + AMP + diphosphate. This is Glycine--tRNA ligase beta subunit from Lactobacillus gasseri (strain ATCC 33323 / DSM 20243 / BCRC 14619 / CIP 102991 / JCM 1131 / KCTC 3163 / NCIMB 11718 / NCTC 13722 / AM63).